The following is a 491-amino-acid chain: NADH-quinone oxidoreductase subunit N 1 (491 aa).

Helical transmembrane passes span 9-29 (IAAPLLALAAGALLILLLDLL), 38-58 (PMYVAAVGAVLVAGWYLVPLW), 76-96 (FAAVYGLVLLGAALLAILLSF), 104-124 (SGYLALLLWAAMGMVLLGGAG), 126-146 (LMVIFLGIELLSLALYVMIAF), 161-181 (FVLGSVAAAFLIFGFALIYGA), 211-231 (VGVGLAIVGLAFKMALVPFHI), 246-266 (AFMAIGTKAAAFAAMARLLVA), 276-296 (FLLPLSILAFASMMLGATVGI), 304-324 (LMAYSGIANAGYLIMAIPGLG), 329-349 (SAAAYYLAAYGFATMGVFAVV), 375-395 (VGVCLAVLFFGLIGVPPTGGF), 410-432 (AWIVLTGLILSTGISAYVYLKVI), and 461-481 (VVLAIATAGTLVLGVLPGPVS).

Belongs to the complex I subunit 2 family. NDH-1 is composed of 14 different subunits. Subunits NuoA, H, J, K, L, M, N constitute the membrane sector of the complex.

It localises to the cell membrane. The enzyme catalyses a quinone + NADH + 5 H(+)(in) = a quinol + NAD(+) + 4 H(+)(out). NDH-1 shuttles electrons from NADH, via FMN and iron-sulfur (Fe-S) centers, to quinones in the respiratory chain. The immediate electron acceptor for the enzyme in this species is believed to be a menaquinone. Couples the redox reaction to proton translocation (for every two electrons transferred, four hydrogen ions are translocated across the cytoplasmic membrane), and thus conserves the redox energy in a proton gradient. This Symbiobacterium thermophilum (strain DSM 24528 / JCM 14929 / IAM 14863 / T) protein is NADH-quinone oxidoreductase subunit N 1.